A 211-amino-acid chain; its full sequence is MKSEQLKIPQATAKRLPLYYRFIESLHAAGKQRVSSTELSQAVKVDSATIRRDFSYFGALGKKGYGYNVQYLLSFFRETLDQDERTNVILVGVGNLGTALLQYNFSKNNNTVITHAFDVDEKKIGTKVGEVPVYNWDKLEEIGLQNVSIAVLTVPASQAQKSADRLVKAGIEGILNFTPVRLSVPAHIRVHHIDLAVELQALVYFLKHYPL.

Positions Leu18–Phe57 form a DNA-binding region, H-T-H motif. Gly92–Gly97 contacts NAD(+).

The protein belongs to the transcriptional regulatory Rex family. Homodimer.

The protein localises to the cytoplasm. In terms of biological role, modulates transcription in response to changes in cellular NADH/NAD(+) redox state. The protein is Redox-sensing transcriptional repressor Rex of Shouchella clausii (strain KSM-K16) (Alkalihalobacillus clausii).